The primary structure comprises 894 residues: Cell wall-associated protease (894 aa).

The signal sequence occupies residues 1–31 (MKRRKFSSVVAAVLIFALIFSLFSPGTKAAA). The Peptidase S8 domain maps to 422–729 (QWPLKNNGEN…YGRLNVMKAV (308 aa)). Residues aspartate 462, histidine 497, and serine 650 each act as charge relay system in the active site.

It belongs to the peptidase S8 family. Proteolytically cleaved to yield CWBP23 and CWBP52.

Its subcellular location is the secreted. It is found in the cell wall. Inhibited by PMSF. CWBP52 is a serine-type protease that could be involved in proteoglycan peptide bridges. This Bacillus subtilis (strain 168) protein is Cell wall-associated protease (wprA).